Here is an 81-residue protein sequence, read N- to C-terminus: Acyl carrier protein (81 aa).

The region spanning Glu-5–Leu-80 is the Carrier domain. Position 40 is an O-(pantetheine 4'-phosphoryl)serine (Ser-40).

This sequence belongs to the acyl carrier protein (ACP) family. Post-translationally, 4'-phosphopantetheine is transferred from CoA to a specific serine of apo-ACP by AcpS. This modification is essential for activity because fatty acids are bound in thioester linkage to the sulfhydryl of the prosthetic group.

Its subcellular location is the cytoplasm. It participates in lipid metabolism; fatty acid biosynthesis. Carrier of the growing fatty acid chain in fatty acid biosynthesis. This is Acyl carrier protein from Thermotoga maritima (strain ATCC 43589 / DSM 3109 / JCM 10099 / NBRC 100826 / MSB8).